We begin with the raw amino-acid sequence, 363 residues long: Type 3 secretion system translocon protein SctB (363 aa).

Polar residues predominate over residues 1-16 (MEIQNTKPTQTLYTDI). The tract at residues 1–30 (MEIQNTKPTQTLYTDISTKQTQSSSETQKS) is disordered. The segment covering 17–30 (STKQTQSSSETQKS) has biased composition (low complexity). An ipgC chaperone binding domain region spans residues 33–73 (YQQIAAHIPLNVGKNPVLTTTLNDDQLLKLSEQVQHDSEII). Residues 99–120 (ISSLSSNAVSLIISVAVLLSAL) traverse the membrane as a helical segment.

The protein belongs to the SctB/SipC family. The core secretion machinery of the T3SS is composed of approximately 20 different proteins, including cytoplasmic components, a base, an export apparatus and a needle. This subunit is involved in the formation of a pore, called the translocon, in host membrane. Interacts with IpaB/SctE. Interacts with the molecular chaperone IpgC, which prevents premature association with IpaB/SctE within the cytoplasm of Shigella cells. Does not interact with CDC42 or RAC1 GTPases in vitro.

Its subcellular location is the secreted. It localises to the host membrane. With respect to regulation, interaction with the membrane is affected by the pH. Its function is as follows. Component of the type III secretion system (T3SS), also called injectisome, which is used to inject bacterial effector proteins into eukaryotic host cells. IpaB/SctE and IpaC/SctB are inserted into the host membrane where they form a pore and allow the translocation of effector proteins into the cytosol of target cells. Induction and secretion of IpaC/SctB comprise the final step in triggering the induction of full type III secretion. In terms of biological role, required for efficient dissemination. Necessary for lysis of the two cellular membranes that surround bacteria in protrusions during cell-to-cell spread. Contribute to actin nucleation in vitro, which may be a necessary step in Shigella invasion. This chain is Type 3 secretion system translocon protein SctB, found in Shigella flexneri.